A 158-amino-acid polypeptide reads, in one-letter code: Transcription elongation factor GreA (158 aa).

Residues 45–72 (AEYHAAREQQSFIEGRIKQLEGELSHAE) are a coiled coil.

This sequence belongs to the GreA/GreB family.

Its function is as follows. Necessary for efficient RNA polymerase transcription elongation past template-encoded arresting sites. The arresting sites in DNA have the property of trapping a certain fraction of elongating RNA polymerases that pass through, resulting in locked ternary complexes. Cleavage of the nascent transcript by cleavage factors such as GreA or GreB allows the resumption of elongation from the new 3'terminus. GreA releases sequences of 2 to 3 nucleotides. The protein is Transcription elongation factor GreA of Xanthomonas campestris pv. campestris (strain ATCC 33913 / DSM 3586 / NCPPB 528 / LMG 568 / P 25).